The sequence spans 256 residues: Trans-aconitate 2-methyltransferase (256 aa).

It belongs to the methyltransferase superfamily. Tam family.

It is found in the cytoplasm. The enzyme catalyses trans-aconitate + S-adenosyl-L-methionine = (E)-3-(methoxycarbonyl)pent-2-enedioate + S-adenosyl-L-homocysteine. Functionally, catalyzes the S-adenosylmethionine monomethyl esterification of trans-aconitate. The protein is Trans-aconitate 2-methyltransferase of Rhizobium rhizogenes (strain K84 / ATCC BAA-868) (Agrobacterium radiobacter).